We begin with the raw amino-acid sequence, 153 residues long: uncharacterized protein (153 aa).

A signal peptide spans 1-22 (MKAFNKLFSLVVASVLVFSLAG). Cys-23 carries the N-palmitoyl cysteine lipid modification. The S-diacylglycerol cysteine moiety is linked to residue Cys-23.

To L.monocytogenes lmo0207.

It is found in the cell membrane. This is an uncharacterized protein from Escherichia coli (strain K12).